Reading from the N-terminus, the 420-residue chain is UDP-N-acetylglucosamine 1-carboxyvinyltransferase (420 aa).

22-23 (KN) serves as a coordination point for phosphoenolpyruvate. Residue Arg93 participates in UDP-N-acetyl-alpha-D-glucosamine binding. Cys117 (proton donor) is an active-site residue. Cys117 carries the 2-(S-cysteinyl)pyruvic acid O-phosphothioketal modification. UDP-N-acetyl-alpha-D-glucosamine is bound by residues 162-165 (KVSV), Asp307, and Ile329.

It belongs to the EPSP synthase family. MurA subfamily.

Its subcellular location is the cytoplasm. It catalyses the reaction phosphoenolpyruvate + UDP-N-acetyl-alpha-D-glucosamine = UDP-N-acetyl-3-O-(1-carboxyvinyl)-alpha-D-glucosamine + phosphate. It functions in the pathway cell wall biogenesis; peptidoglycan biosynthesis. Its function is as follows. Cell wall formation. Adds enolpyruvyl to UDP-N-acetylglucosamine. In Actinobacillus succinogenes (strain ATCC 55618 / DSM 22257 / CCUG 43843 / 130Z), this protein is UDP-N-acetylglucosamine 1-carboxyvinyltransferase.